We begin with the raw amino-acid sequence, 220 residues long: Cysteine-rich venom protein (220 aa).

The SCP domain maps to 20-147; it reads DLHNSLRRSV…AYKYFYVCQY (128 aa). 8 disulfide bridges follow: Cys-56/Cys-134, Cys-73/Cys-148, Cys-129/Cys-145, Cys-167/Cys-174, Cys-170/Cys-179, Cys-183/Cys-215, Cys-192/Cys-209, and Cys-200/Cys-213. The region spanning 183–215 is the ShKT domain; that stretch reads CTREDEFINCNDLVKQGCQTDYLKSNCAASCFC.

In terms of tissue distribution, expressed by the venom gland.

It is found in the secreted. Its function is as follows. Blocks contraction of smooth muscle elicited by high potassium-induced depolarization, but does not block caffeine-stimulated contraction. May target voltage-gated calcium channels in smooth muscle. The polypeptide is Cysteine-rich venom protein (Echis coloratus (Carpet viper)).